The chain runs to 119 residues: Large ribosomal subunit protein bL19 (119 aa).

Belongs to the bacterial ribosomal protein bL19 family.

Functionally, this protein is located at the 30S-50S ribosomal subunit interface and may play a role in the structure and function of the aminoacyl-tRNA binding site. This is Large ribosomal subunit protein bL19 from Leuconostoc mesenteroides subsp. mesenteroides (strain ATCC 8293 / DSM 20343 / BCRC 11652 / CCM 1803 / JCM 6124 / NCDO 523 / NBRC 100496 / NCIMB 8023 / NCTC 12954 / NRRL B-1118 / 37Y).